The primary structure comprises 483 residues: Uridine/cytidine kinase UKL1, chloroplastic (483 aa).

Residues 1–47 constitute a chloroplast transit peptide; that stretch reads MPEDSTAIDYVMEKASGPHFSGLRLDGLLSSPSKSSVSSPSHFRLSN. The uridine kinase stretch occupies residues 59–264; the sequence is PHQPFVIGVT…IVQHIHTKLG (206 aa). Positions 274-483 are uracil phosphoribosyltransferase; it reads NVFVIETTFQ…FGDRYFGTDE (210 aa). Residues lysine 298, arginine 307, and 341–344 contribute to the GTP site; that span reads CKKL. 5-phospho-alpha-D-ribose 1-diphosphate-binding residues include arginine 351 and arginine 376. Residue arginine 396 coordinates GTP. Residues aspartate 402, 407–410, and glutamate 473 contribute to the 5-phospho-alpha-D-ribose 1-diphosphate site; that span reads TGNS. Uracil is bound at residue 472-474; it reads GEF.

In the N-terminal section; belongs to the uridine kinase family. This sequence in the C-terminal section; belongs to the UPRTase family.

Its subcellular location is the plastid. The protein localises to the chloroplast. The catalysed reaction is cytidine + ATP = CMP + ADP + H(+). The enzyme catalyses uridine + ATP = UMP + ADP + H(+). It functions in the pathway pyrimidine metabolism; CTP biosynthesis via salvage pathway; CTP from cytidine: step 1/3. Its pathway is pyrimidine metabolism; UMP biosynthesis via salvage pathway; UMP from uridine: step 1/1. In terms of biological role, involved in the pyrimidine salvage pathway. Phosphorylates uridine to uridine monophosphate (UMP). Phosphorylates cytidine to cytidine monophosphate (CMP). Does not possess uracil phosphoribosyltransferase (UPRTase) activity that catalyzes the conversion of uracil and 5-phospho-alpha-D-ribose 1-diphosphate (PRPP) to UMP and diphosphate. The chain is Uridine/cytidine kinase UKL1, chloroplastic from Arabidopsis thaliana (Mouse-ear cress).